Here is an 86-residue protein sequence, read N- to C-terminus: Ferredoxin-like protein YgcO (86 aa).

Residues 45–74 (GNLRIDYRSCLECGTCRLLCDESTLQQWRY) enclose the 4Fe-4S ferredoxin-type domain.

This sequence belongs to the bacterial-type ferredoxin family. FixX subfamily.

Its function is as follows. Could be a 3Fe-4S cluster-containing protein. Probably participates in a redox process with YgcN, YgcQ and YgcR. The chain is Ferredoxin-like protein YgcO (ygcO) from Escherichia coli (strain K12).